The chain runs to 97 residues: Sorbitol dehydrogenase (97 aa).

C44 provides a ligand contact to Zn(2+). Y50 provides a ligand contact to substrate. Zn(2+) contacts are provided by H69 and E70.

The protein belongs to the zinc-containing alcohol dehydrogenase family. Homotetramer. Zn(2+) is required as a cofactor.

It is found in the mitochondrion membrane. The protein localises to the cell projection. Its subcellular location is the cilium. The protein resides in the flagellum. It catalyses the reaction xylitol + NAD(+) = D-xylulose + NADH + H(+). The enzyme catalyses L-iditol + NAD(+) = keto-L-sorbose + NADH + H(+). It carries out the reaction keto-D-fructose + NADH + H(+) = D-sorbitol + NAD(+). In terms of biological role, polyol dehydrogenase that catalyzes the reversible NAD(+)-dependent oxidation of various sugar alcohols. Is active with xylitol, L-iditol and D-sorbitol (D-glucitol) as substrates, leading to the C2-oxidized products D-xylulose, L-sorbose and D-fructose, respectively. Is a key enzyme in the polyol pathway that interconverts glucose and fructose via sorbitol, which constitutes an important alternate route for glucose metabolism. May play a role in sperm motility by using sorbitol as an alternative energy source for sperm motility. This is Sorbitol dehydrogenase (SORD) from Sus scrofa (Pig).